We begin with the raw amino-acid sequence, 367 residues long: Pre-small/secreted glycoprotein (367 aa).

Residues 1 to 33 (MGSGYQLLQLPRERFRKTSFLVWVIILFQRAIS) form the signal peptide. N41 is a glycosylation site (N-linked (GlcNAc...) asparagine; by host). 2 disulfide bridges follow: C109–C136 and C122–C148. N205, N239, N258, and N269 each carry an N-linked (GlcNAc...) asparagine; by host glycan.

It belongs to the filoviruses glycoprotein family. As to quaternary structure, homodimer; disulfide-linked. The homodimers are linked by two disulfide bonds in a parallel orientation. In terms of assembly, monomer. In terms of processing, this precursor is processed into mature sGP and delta-peptide by host furin or furin-like proteases. The cleavage site corresponds to the furin optimal cleavage sequence [KR]-X-[KR]-R. Post-translationally, N-glycosylated. O-glycosylated.

The protein localises to the secreted. Its function is as follows. Seems to possess an anti-inflammatory activity as it can reverse the barrier-decreasing effects of TNF alpha. Might therefore contribute to the lack of inflammatory reaction seen during infection in spite the of extensive necrosis and massive virus production. Does not seem to be involved in activation of primary macrophages. Does not seem to interact specifically with neutrophils. Functionally, viroporin that permeabilizes mammalian cell plasma membranes. It acts by altering permeation of ionic compounds and small molecules. This activity may lead to viral enterotoxic activity. This is Pre-small/secreted glycoprotein (GP) from Reston ebolavirus (strain Philippines-96) (REBOV).